A 131-amino-acid polypeptide reads, in one-letter code: Large ribosomal subunit protein uL24 (131 aa).

It belongs to the universal ribosomal protein uL24 family. As to quaternary structure, part of the 50S ribosomal subunit.

Functionally, one of two assembly initiator proteins, it binds directly to the 5'-end of the 23S rRNA, where it nucleates assembly of the 50S subunit. Its function is as follows. Located at the polypeptide exit tunnel on the outside of the subunit. The polypeptide is Large ribosomal subunit protein uL24 (Korarchaeum cryptofilum (strain OPF8)).